The following is a 156-amino-acid chain: ATP synthase subunit b (156 aa).

A helical transmembrane segment spans residues 3–23; sequence ITFTIFAQSLAFAALIWIVAT.

The protein belongs to the ATPase B chain family. As to quaternary structure, F-type ATPases have 2 components, F(1) - the catalytic core - and F(0) - the membrane proton channel. F(1) has five subunits: alpha(3), beta(3), gamma(1), delta(1), epsilon(1). F(0) has three main subunits: a(1), b(2) and c(10-14). The alpha and beta chains form an alternating ring which encloses part of the gamma chain. F(1) is attached to F(0) by a central stalk formed by the gamma and epsilon chains, while a peripheral stalk is formed by the delta and b chains.

It localises to the cell inner membrane. Functionally, f(1)F(0) ATP synthase produces ATP from ADP in the presence of a proton or sodium gradient. F-type ATPases consist of two structural domains, F(1) containing the extramembraneous catalytic core and F(0) containing the membrane proton channel, linked together by a central stalk and a peripheral stalk. During catalysis, ATP synthesis in the catalytic domain of F(1) is coupled via a rotary mechanism of the central stalk subunits to proton translocation. In terms of biological role, component of the F(0) channel, it forms part of the peripheral stalk, linking F(1) to F(0). The sequence is that of ATP synthase subunit b from Xylella fastidiosa (strain M23).